The chain runs to 273 residues: 2,3,4,5-tetrahydropyridine-2,6-dicarboxylate N-succinyltransferase (273 aa).

Substrate is bound by residues Arg-105 and Asp-142.

Belongs to the transferase hexapeptide repeat family. In terms of assembly, homotrimer.

Its subcellular location is the cytoplasm. The enzyme catalyses (S)-2,3,4,5-tetrahydrodipicolinate + succinyl-CoA + H2O = (S)-2-succinylamino-6-oxoheptanedioate + CoA. Its pathway is amino-acid biosynthesis; L-lysine biosynthesis via DAP pathway; LL-2,6-diaminopimelate from (S)-tetrahydrodipicolinate (succinylase route): step 1/3. The protein is 2,3,4,5-tetrahydropyridine-2,6-dicarboxylate N-succinyltransferase of Bordetella parapertussis (strain 12822 / ATCC BAA-587 / NCTC 13253).